The sequence spans 595 residues: Chaperone protein HscA homolog (595 aa).

It belongs to the heat shock protein 70 family.

In terms of biological role, chaperone involved in the maturation of iron-sulfur cluster-containing proteins. Has a low intrinsic ATPase activity which is markedly stimulated by HscB. The protein is Chaperone protein HscA homolog of Rickettsia conorii (strain ATCC VR-613 / Malish 7).